The sequence spans 1104 residues: Ankyrin repeat- and BTB/POZ domain-containing protein 3 (1104 aa).

A helical transmembrane segment spans residues 168–188 (IVLSWGLAAHCTAAALAALSL). The tract at residues 260–301 (SCSGPGSGSGSGPGPSSGPGAAPAADKEREAPGGGAASGGAC) is disordered. Residues 264–276 (PGSGSGSGPGPSS) show a composition bias toward gly residues. ANK repeat units lie at residues 603–632 (QGMT…DLNV), 649–678 (RHWT…KVEG), 687–716 (YSET…DPLI), 730–759 (GDMN…KEKS), and 825–854 (TWLE…TIQE). Residues 923 to 989 (SDVTFLVEGR…LYYGGPESLL (67 aa)) form the BTB domain.

The protein resides in the membrane. This chain is Ankyrin repeat- and BTB/POZ domain-containing protein 3, found in Homo sapiens (Human).